Here is a 154-residue protein sequence, read N- to C-terminus: 3-dehydroquinate dehydratase (154 aa).

Tyrosine 26 functions as the Proton acceptor in the catalytic mechanism. The substrate site is built by asparagine 77, histidine 83, and aspartate 90. The active-site Proton donor is the histidine 103. Substrate is bound by residues 104–105 (IS) and arginine 114.

This sequence belongs to the type-II 3-dehydroquinase family. In terms of assembly, homododecamer.

The enzyme catalyses 3-dehydroquinate = 3-dehydroshikimate + H2O. Its pathway is metabolic intermediate biosynthesis; chorismate biosynthesis; chorismate from D-erythrose 4-phosphate and phosphoenolpyruvate: step 3/7. Catalyzes a trans-dehydration via an enolate intermediate. The sequence is that of 3-dehydroquinate dehydratase from Buchnera aphidicola subsp. Baizongia pistaciae (strain Bp).